An 87-amino-acid polypeptide reads, in one-letter code: Pro-gurmarin (87 aa).

Positions 1 to 20 (MAKFAAIVLLILVASATVNA) are cleaved as a signal peptide. The propeptide occupies 21-52 (VKEHDELPTTGMSRKILLQPVFKSLIISIAEG). Residue glutamine 53 is modified to Pyrrolidone carboxylic acid. 3 cysteine pairs are disulfide-bonded: cysteine 55/cysteine 70, cysteine 62/cysteine 75, and cysteine 69/cysteine 85.

As to expression, expressed in leaves (at protein level).

Functionally, peptide that strongly, but reversibly, suppresses the sweet taste-response to various sweeteners, including sugars, sweet amino acids and the artificial sweetener saccharin. In rodents, potentially binds to a sweet taste receptor present on apical microvilli of a subset of taste bud cells. Highly effective at blocking the sweet taste-response in rodents such as rats and mice, though mice may possess a mix of gurmarin-sensitive and -insensitive receptors. Has almost no effect on the sweet taste-response in humans. Inhibits Staphylococcus aureus biofilm formation without affecting bacterial viability. May be one of at least 9 different disulfide-rich peptides produced with varying properties. This is Pro-gurmarin from Gymnema sylvestre (Gurmar).